The following is an 82-amino-acid chain: Small ribosomal subunit protein bS16 (82 aa).

The protein belongs to the bacterial ribosomal protein bS16 family.

The chain is Small ribosomal subunit protein bS16 from Pseudoalteromonas translucida (strain TAC 125).